We begin with the raw amino-acid sequence, 87 residues long: Stannin (87 aa).

Over 1 to 10 (MSIMDHSPTT) the chain is Mitochondrial intermembrane. A helical membrane pass occupies residues 11-31 (GVVTVIVILIAIAALGALILG). The Cytoplasmic segment spans residues 32–87 (CWCYLRLQRISQSEDEESIVGDGETKEPFLLVQYSAKGPCVERKAKLTPNGPEVHS). Phosphoserine is present on Ser-49.

It belongs to the stannin family. As to quaternary structure, monomer.

The protein resides in the mitochondrion outer membrane. Plays a role in the toxic effects of organotins. Plays a role in endosomal maturation. In Bos taurus (Bovine), this protein is Stannin (SNN).